A 132-amino-acid chain; its full sequence is MVMTDPIADLLTRIRNANVVRHEVVEVPSSTIKKAVLNIMLQEGYIKNLEEYADGSVNMIRLSMKYGKNKERVITGLKRISKPGLRVYCRKEEIPKVLNGLGVAIISTSKGIVTDREARKLGVGGEVLCYIW.

Belongs to the universal ribosomal protein uS8 family. In terms of assembly, part of the 30S ribosomal subunit. Contacts proteins S5 and S12.

One of the primary rRNA binding proteins, it binds directly to 16S rRNA central domain where it helps coordinate assembly of the platform of the 30S subunit. This chain is Small ribosomal subunit protein uS8, found in Clostridium kluyveri (strain NBRC 12016).